Here is a 109-residue protein sequence, read N- to C-terminus: UPF0482 protein ESA_01750 (109 aa).

The N-terminal stretch at 1–24 (MNKFLRHSLLLALLTGALSGVANA) is a signal peptide. Residues 38–55 (RTRQDAAMDKEQWNDTRS) are compositionally biased toward basic and acidic residues. Positions 38–63 (RTRQDAAMDKEQWNDTRSLRQKVNKR) are disordered.

It belongs to the UPF0482 family.

This is UPF0482 protein ESA_01750 from Cronobacter sakazakii (strain ATCC BAA-894) (Enterobacter sakazakii).